Consider the following 94-residue polypeptide: Small ribosomal subunit protein uS19 (94 aa).

Belongs to the universal ribosomal protein uS19 family.

Protein S19 forms a complex with S13 that binds strongly to the 16S ribosomal RNA. This Acidobacterium capsulatum (strain ATCC 51196 / DSM 11244 / BCRC 80197 / JCM 7670 / NBRC 15755 / NCIMB 13165 / 161) protein is Small ribosomal subunit protein uS19.